A 499-amino-acid chain; its full sequence is Hepatic triacylglycerol lipase (499 aa).

A signal peptide spans 1 to 21; sequence MGSPLCVPIFLAVCILIQSST. The N-linked (GlcNAc...) asparagine glycan is linked to asparagine 78. Serine 168 serves as the catalytic Nucleophile. Aspartate 194 functions as the Charge relay system in the catalytic mechanism. The segment at 254–277 is essential for determining substrate specificity; that stretch reads CHFLELYKHIAQHGLNALSQTIKC. Histidine 279 (charge relay system) is an active-site residue. The PLAT domain occupies 352 to 486; sequence YHYQFKIQFI…HPTQEKNFVR (135 aa). N-linked (GlcNAc...) asparagine glycosylation occurs at asparagine 397.

This sequence belongs to the AB hydrolase superfamily. Lipase family. As to quaternary structure, homodimer.

It localises to the secreted. The enzyme catalyses a triacylglycerol + H2O = a diacylglycerol + a fatty acid + H(+). It catalyses the reaction a 1-acyl-sn-glycero-3-phosphocholine + H2O = sn-glycerol 3-phosphocholine + a fatty acid + H(+). The catalysed reaction is a 1,2-diacyl-sn-glycero-3-phosphocholine + H2O = a 2-acyl-sn-glycero-3-phosphocholine + a fatty acid + H(+). It carries out the reaction 1,2,3-tri-(9Z-octadecenoyl)-glycerol + H2O = di-(9Z)-octadecenoylglycerol + (9Z)-octadecenoate + H(+). The enzyme catalyses 1,2-di-(9Z-octadecenoyl)-sn-glycero-3-phosphocholine + H2O = (9Z-octadecenoyl)-sn-glycero-3-phosphocholine + (9Z)-octadecenoate + H(+). It catalyses the reaction 1,2,3-tributanoylglycerol + H2O = dibutanoylglycerol + butanoate + H(+). The catalysed reaction is 1,2-dihexadecanoyl-sn-glycero-3-phosphocholine + H2O = hexadecanoyl-sn-glycero-3-phosphocholine + hexadecanoate + H(+). It carries out the reaction 1,2-di-(9Z-octadecenoyl)-sn-glycerol + H2O = 2-(9Z-octadecenoyl)-glycerol + (9Z)-octadecenoate + H(+). The enzyme catalyses 1,2,3-tri-(9Z-octadecenoyl)-glycerol + H2O = 2,3-di-(9Z)-octadecenoyl-sn-glycerol + (9Z)-octadecenoate + H(+). It catalyses the reaction 1-(9Z-octadecenoyl)-sn-glycero-3-phospho-L-serine + H2O = sn-glycero-3-phospho-L-serine + (9Z)-octadecenoate + H(+). The catalysed reaction is 1-hexadecanoyl-sn-glycero-3-phosphocholine + H2O = sn-glycerol 3-phosphocholine + hexadecanoate + H(+). It carries out the reaction 1,3-di-(9Z-octadecenoyl)-glycerol + H2O = 3-(9Z-octadecenoyl)-sn-glycerol + (9Z)-octadecenoate + H(+). Its function is as follows. Catalyzes the hydrolysis of triglycerides and phospholipids present in circulating plasma lipoproteins, including chylomicrons, intermediate density lipoproteins (IDL), low density lipoproteins (LDL) of large size and high density lipoproteins (HDL), releasing free fatty acids (FFA) and smaller lipoprotein particles. Also exhibits lysophospholipase activity. Can hydrolyze both neutral lipid and phospholipid substrates but shows a greater binding affinity for neutral lipid substrates than phospholipid substrates. In native LDL, preferentially hydrolyzes the phosphatidylcholine species containing polyunsaturated fatty acids at sn-2 position. This Oryctolagus cuniculus (Rabbit) protein is Hepatic triacylglycerol lipase (LIPC).